The sequence spans 312 residues: MLTELALGLFALWIAIFSQALHKIEEGHVGVYYRGGALLKAVTNPGYHMHIPFLTTVKSVQVTLQTDEATNVPCGTSGGVLIYFDRIEVVNFLSQDSVYAIVKNYTVDYDRPLIFNKVHHEVNQFCSVHTLQEVYIDLFDKIDEEIKNALQEDLVKMAPGLYVQAVRVTKPKIPEAIRLNYEKMEAEKTKLLVAQETQKVVEKLAETERKKAVIEAEKAAQVALIHQKRLLSEKETEKLLNQMEAESNLASERSKADAEFYKAQKQADSNKILLTKEYLELQKIRAIASNNKIYYGDSIPQAFVMGTTQQTV.

Topologically, residues 1-3 (MLT) are cytoplasmic. Residues 4–24 (ELALGLFALWIAIFSQALHKI) traverse the membrane as a helical segment. Residues 25 to 312 (EEGHVGVYYR…FVMGTTQQTV (288 aa)) are Lumenal-facing. The N-linked (GlcNAc...) asparagine glycan is linked to N104.

This sequence belongs to the band 7/mec-2 family. In terms of assembly, seems to form a multimeric complex. As to expression, expressed in the germline only.

The protein localises to the endoplasmic reticulum membrane. This chain is Erlin, found in Caenorhabditis elegans.